The chain runs to 152 residues: Xanthine-guanine phosphoribosyltransferase (152 aa).

Residues 37–38 (RG) and 88–96 (DDLVDTGGT) contribute to the 5-phospho-alpha-D-ribose 1-diphosphate site. Asp89 serves as a coordination point for Mg(2+). The guanine site is built by Asp92 and Ile135. Residues Asp92 and Ile135 each contribute to the xanthine site. GMP contacts are provided by residues 92-96 (DTGGT) and 134-135 (WI).

This sequence belongs to the purine/pyrimidine phosphoribosyltransferase family. XGPT subfamily. As to quaternary structure, homotetramer. The cofactor is Mg(2+).

It is found in the cell inner membrane. It catalyses the reaction GMP + diphosphate = guanine + 5-phospho-alpha-D-ribose 1-diphosphate. The enzyme catalyses XMP + diphosphate = xanthine + 5-phospho-alpha-D-ribose 1-diphosphate. The catalysed reaction is IMP + diphosphate = hypoxanthine + 5-phospho-alpha-D-ribose 1-diphosphate. The protein operates within purine metabolism; GMP biosynthesis via salvage pathway; GMP from guanine: step 1/1. It functions in the pathway purine metabolism; XMP biosynthesis via salvage pathway; XMP from xanthine: step 1/1. Functionally, purine salvage pathway enzyme that catalyzes the transfer of the ribosyl-5-phosphate group from 5-phospho-alpha-D-ribose 1-diphosphate (PRPP) to the N9 position of the 6-oxopurines guanine and xanthine to form the corresponding ribonucleotides GMP (guanosine 5'-monophosphate) and XMP (xanthosine 5'-monophosphate), with the release of PPi. To a lesser extent, also acts on hypoxanthine. The chain is Xanthine-guanine phosphoribosyltransferase from Yersinia enterocolitica serotype O:8 / biotype 1B (strain NCTC 13174 / 8081).